The sequence spans 147 residues: NADH-quinone oxidoreductase subunit A (147 aa).

3 helical membrane passes run 16–36, 68–88, and 98–118; these read FAIF…GGWF, FYLV…LFAW, and VGFV…VYLV.

Belongs to the complex I subunit 3 family. As to quaternary structure, NDH-1 is composed of 13 different subunits. Subunits NuoA, H, J, K, L, M, N constitute the membrane sector of the complex.

It localises to the cell inner membrane. It carries out the reaction a quinone + NADH + 5 H(+)(in) = a quinol + NAD(+) + 4 H(+)(out). Its function is as follows. NDH-1 shuttles electrons from NADH, via FMN and iron-sulfur (Fe-S) centers, to quinones in the respiratory chain. The immediate electron acceptor for the enzyme in this species is believed to be ubiquinone. Couples the redox reaction to proton translocation (for every two electrons transferred, four hydrogen ions are translocated across the cytoplasmic membrane), and thus conserves the redox energy in a proton gradient. The sequence is that of NADH-quinone oxidoreductase subunit A from Citrobacter koseri (strain ATCC BAA-895 / CDC 4225-83 / SGSC4696).